The chain runs to 415 residues: Isocitrate dehydrogenase [NADP] (415 aa).

Residues 77-79 (TIT) and arginine 84 each bind NADP(+). A substrate-binding site is contributed by threonine 79. Substrate-binding positions include 96–102 (SPNGTIR), arginine 111, and arginine 134. Aspartate 254 provides a ligand contact to Mn(2+). Residue lysine 262 participates in NADP(+) binding. Residue aspartate 277 participates in Mn(2+) binding. Residues 312 to 317 (GTVTRH) and asparagine 330 contribute to the NADP(+) site.

This sequence belongs to the isocitrate and isopropylmalate dehydrogenases family. In terms of assembly, heterodimer. Mg(2+) serves as cofactor. The cofactor is Mn(2+).

The protein localises to the cytoplasm. The catalysed reaction is D-threo-isocitrate + NADP(+) = 2-oxoglutarate + CO2 + NADPH. Its function is as follows. May supply 2-oxoglutarate for amino acid biosynthesis and ammonia assimilation via the glutamine synthetase/glutamate synthase (GS/GOGAT) pathway. This Nicotiana tabacum (Common tobacco) protein is Isocitrate dehydrogenase [NADP].